A 507-amino-acid polypeptide reads, in one-letter code: Efflux pump ustT (507 aa).

Transmembrane regions (helical) follow at residues 59–79, 146–166, 180–200, 216–236, 240–260, 316–336, 359–379, 398–418, 421–441, 449–469, and 481–501; these read IAVVASLTFLITDIAGQIIVA, LLIAMVGCLLSDIWVGVVTWF, IWQLIGGGGASISSMAFAMIA, HAAVLVAELVSVPAGAALANF, IPVFGAAIFMVLGILFAYVVV, VLLIMASFFVCQLGRMISGIT, AGVNLFVLAAIIPALSYILVK, VCLIIGSFVMFLAASPGTLVF, TVFALGFAFSVTARSFLTGMV, VFTGVTTMLYGGLVIGSPMLA, and IWVGLPFLLAAVLFTLALGAI.

The protein belongs to the major facilitator superfamily.

Its subcellular location is the cell membrane. It functions in the pathway mycotoxin biosynthesis. In terms of biological role, efflux pump; part of the gene cluster that mediates the biosynthesis of the secondary metabolite ustiloxin B, an antimitotic tetrapeptide. Probably involved in self-resistance through the export of ustiloxin B. The protein is Efflux pump ustT of Aspergillus flavus (strain ATCC 200026 / FGSC A1120 / IAM 13836 / NRRL 3357 / JCM 12722 / SRRC 167).